A 134-amino-acid chain; its full sequence is L-ectoine synthase (134 aa).

Belongs to the ectoine synthase family.

The enzyme catalyses (2S)-4-acetamido-2-aminobutanoate = L-ectoine + H2O. It participates in amine and polyamine biosynthesis; ectoine biosynthesis; L-ectoine from L-aspartate 4-semialdehyde: step 3/3. In terms of biological role, catalyzes the circularization of gamma-N-acetyl-alpha,gamma-diaminobutyric acid (ADABA) to ectoine (1,4,5,6-tetrahydro-2-methyl-4-pyrimidine carboxylic acid), which is an excellent osmoprotectant. The polypeptide is L-ectoine synthase (ectC) (Sporosarcina pasteurii (Bacillus pasteurii)).